Consider the following 170-residue polypeptide: Orotate phosphoribosyltransferase (170 aa).

Residues arginine 86, lysine 87, lysine 90, histidine 92, and 111-119 each bind 5-phospho-alpha-D-ribose 1-diphosphate; that span reads EDVTTSGGS. Residues threonine 115 and arginine 143 each contribute to the orotate site.

The protein belongs to the purine/pyrimidine phosphoribosyltransferase family. PyrE subfamily. Homodimer. Mg(2+) serves as cofactor.

It carries out the reaction orotidine 5'-phosphate + diphosphate = orotate + 5-phospho-alpha-D-ribose 1-diphosphate. Its pathway is pyrimidine metabolism; UMP biosynthesis via de novo pathway; UMP from orotate: step 1/2. Functionally, catalyzes the transfer of a ribosyl phosphate group from 5-phosphoribose 1-diphosphate to orotate, leading to the formation of orotidine monophosphate (OMP). The polypeptide is Orotate phosphoribosyltransferase (Methanoculleus marisnigri (strain ATCC 35101 / DSM 1498 / JR1)).